A 252-amino-acid chain; its full sequence is Imidazole glycerol phosphate synthase subunit HisF (252 aa).

Active-site residues include D11 and D130.

This sequence belongs to the HisA/HisF family. Heterodimer of HisH and HisF.

Its subcellular location is the cytoplasm. It catalyses the reaction 5-[(5-phospho-1-deoxy-D-ribulos-1-ylimino)methylamino]-1-(5-phospho-beta-D-ribosyl)imidazole-4-carboxamide + L-glutamine = D-erythro-1-(imidazol-4-yl)glycerol 3-phosphate + 5-amino-1-(5-phospho-beta-D-ribosyl)imidazole-4-carboxamide + L-glutamate + H(+). It participates in amino-acid biosynthesis; L-histidine biosynthesis; L-histidine from 5-phospho-alpha-D-ribose 1-diphosphate: step 5/9. Functionally, IGPS catalyzes the conversion of PRFAR and glutamine to IGP, AICAR and glutamate. The HisF subunit catalyzes the cyclization activity that produces IGP and AICAR from PRFAR using the ammonia provided by the HisH subunit. This is Imidazole glycerol phosphate synthase subunit HisF from Sulfurihydrogenibium sp. (strain YO3AOP1).